Consider the following 354-residue polypeptide: 4-hydroxy-3-methylbut-2-en-1-yl diphosphate synthase (flavodoxin) (354 aa).

[4Fe-4S] cluster contacts are provided by C263, C266, C298, and E305.

The protein belongs to the IspG family. Requires [4Fe-4S] cluster as cofactor.

It carries out the reaction (2E)-4-hydroxy-3-methylbut-2-enyl diphosphate + oxidized [flavodoxin] + H2O + 2 H(+) = 2-C-methyl-D-erythritol 2,4-cyclic diphosphate + reduced [flavodoxin]. The protein operates within isoprenoid biosynthesis; isopentenyl diphosphate biosynthesis via DXP pathway; isopentenyl diphosphate from 1-deoxy-D-xylulose 5-phosphate: step 5/6. Converts 2C-methyl-D-erythritol 2,4-cyclodiphosphate (ME-2,4cPP) into 1-hydroxy-2-methyl-2-(E)-butenyl 4-diphosphate. In Fusobacterium nucleatum subsp. nucleatum (strain ATCC 25586 / DSM 15643 / BCRC 10681 / CIP 101130 / JCM 8532 / KCTC 2640 / LMG 13131 / VPI 4355), this protein is 4-hydroxy-3-methylbut-2-en-1-yl diphosphate synthase (flavodoxin).